We begin with the raw amino-acid sequence, 783 residues long: Rho GTPase-activating protein gacR (783 aa).

The stretch at 138–188 (AKNRFDKARLSFDEASEQFKQLRKKQNNINNEKLLEAEEDLDYATQQFSDI) forms a coiled coil. Residues 262–299 (QFEQTNSSRTISLPPPPPPKPTSSTPSSSPSPSPSSSI) are disordered. Low complexity predominate over residues 283 to 299 (TSSTPSSSPSPSPSSSI). The 191-residue stretch at 319 to 509 (MALSTITERE…FIISNFNNIF (191 aa)) folds into the Rho-GAP domain. Positions 527–539 (GSSGGGGGGGSSG) are enriched in gly residues. The disordered stretch occupies residues 527–745 (GSSGGGGGGG…TTNSRPLSNS (219 aa)). Low complexity-rich tracts occupy residues 568-589 (SVNT…ASSA), 599-630 (PSSS…NINP), 641-651 (PKKISSSSNSL), and 661-698 (SIPE…RSST). Positions 706–738 (NRVSMYLQNSNTGVPLPSQKPQRVISNNNTTTN) are enriched in polar residues.

The protein resides in the cytoplasm. In terms of biological role, rho GTPase-activating protein involved in the signal transduction pathway. The sequence is that of Rho GTPase-activating protein gacR (gacR) from Dictyostelium discoideum (Social amoeba).